The sequence spans 374 residues: tRNA-specific 2-thiouridylase MnmA (374 aa).

Residues 13 to 20 (GMSGGVDS) and Met39 each bind ATP. The interaction with target base in tRNA stretch occupies residues 99–101 (NPD). Cys104 (nucleophile) is an active-site residue. A disulfide bond links Cys104 and Cys201. Gly128 is a binding site for ATP. The tract at residues 151–153 (KDQ) is interaction with tRNA. Residue Cys201 is the Cysteine persulfide intermediate of the active site. The segment at 313 to 314 (RY) is interaction with tRNA.

The protein belongs to the MnmA/TRMU family.

The protein localises to the cytoplasm. It catalyses the reaction S-sulfanyl-L-cysteinyl-[protein] + uridine(34) in tRNA + AH2 + ATP = 2-thiouridine(34) in tRNA + L-cysteinyl-[protein] + A + AMP + diphosphate + H(+). Functionally, catalyzes the 2-thiolation of uridine at the wobble position (U34) of tRNA, leading to the formation of s(2)U34. The sequence is that of tRNA-specific 2-thiouridylase MnmA from Streptococcus equi subsp. zooepidemicus (strain MGCS10565).